The sequence spans 452 residues: Probable multidrug resistance protein NorM (452 aa).

Transmembrane regions (helical) follow at residues 12 to 34, 49 to 71, 91 to 113, 128 to 150, 162 to 184, 194 to 216, 245 to 267, 282 to 304, 317 to 339, 359 to 381, 388 to 410, and 415 to 437; these read RQFL…ITVL, GVAI…LTAV, VIQS…YFLI, VIAK…YNVM, VTML…FIFG, AGAG…YIVH, GIPI…LLMS, NFAS…VVGF, YSYL…ILLF, DFLL…QGAL, NYTL…FVIG, and FGAF…GLFF.

It belongs to the multi antimicrobial extrusion (MATE) (TC 2.A.66.1) family.

Its subcellular location is the cell membrane. Functionally, multidrug efflux pump. The chain is Probable multidrug resistance protein NorM (norM) from Bacillus licheniformis (strain ATCC 14580 / DSM 13 / JCM 2505 / CCUG 7422 / NBRC 12200 / NCIMB 9375 / NCTC 10341 / NRRL NRS-1264 / Gibson 46).